Here is a 648-residue protein sequence, read N- to C-terminus: Proton myo-inositol cotransporter (648 aa).

Residues 1–76 (MSRKASENVE…AARRQFQQDE (76 aa)) lie on the Cytoplasmic side of the membrane. 3 positions are modified to phosphoserine: Ser6, Ser47, and Ser50. A helical transmembrane segment spans residues 77 to 97 (TPAFVYVVAVFSALGGFLFGY). The Extracellular segment spans residues 98-125 (DTGVVSGAMLLLKRQLSLDALWQELLVS). A helical membrane pass occupies residues 126–146 (STVGAAAVSALAGGALNGVFG). Over 147–148 (RR) the chain is Cytoplasmic. A helical transmembrane segment spans residues 149 to 169 (AAILLASALFTAGSAVLAAAN). Residues 170 to 178 (NKETLLAGR) are Extracellular-facing. A helical membrane pass occupies residues 179–199 (LVVGLGIGIASMTVPVYIAEV). Residues 200-212 (SPPNLRGRLVTIN) are Cytoplasmic-facing. Residues 213–233 (TLFITGGQFFASVVDGAFSYL) form a helical membrane-spanning segment. Over 234–239 (QKDGWR) the chain is Extracellular. Residues 240-260 (YMLGLAAVPAVIQFFGFLFLP) form a helical membrane-spanning segment. Topologically, residues 261-324 (ESPRWLIQKG…RMLSYPPTRR (64 aa)) are cytoplasmic. The helical transmembrane segment at 325 to 345 (ALIVGCGLQMFQQLSGINTIM) threads the bilayer. The Extracellular portion of the chain corresponds to 346–363 (YYSATILQMSGVEDDRLA). The helical transmembrane segment at 364–384 (IWLASVTAFTNFIFTLVGVWL) threads the bilayer. Over 385–393 (VEKVGRRKL) the chain is Cytoplasmic. Residues 394-414 (TFGSLAGTTVALIILALGFVL) form a helical membrane-spanning segment. Topologically, residues 415-508 (SAQVSPRITF…NFCPTPYSWT (94 aa)) are extracellular. N-linked (GlcNAc...) asparagine glycans are attached at residues Asn433, Asn458, and Asn485. Residues 509-529 (ALLGLILYLVFFAPGMGPMPW) traverse the membrane as a helical segment. Residues 530-549 (TVNSEIYPLWARSTGNACSS) lie on the Cytoplasmic side of the membrane. A helical transmembrane segment spans residues 550-570 (GINWIFNVLVSLTFLHTAEYL). The Extracellular segment spans residues 571–573 (TYY). Residues 574-594 (GAFFLYAGFAAVGLLFIYGCL) form a helical membrane-spanning segment. Residues 595–648 (PETKGKKLEEIESLFDNRLCTCGTSDSDEGRYIEYIRVKGSNYHLSDNDASDVE) lie on the Cytoplasmic side of the membrane. Ser640 and Ser645 each carry phosphoserine.

This sequence belongs to the major facilitator superfamily. Sugar transporter (TC 2.A.1.1) family. Post-translationally, glycosylated. Predominantly expressed in the brain.

It is found in the cell membrane. It carries out the reaction myo-inositol(out) + H(+)(out) = myo-inositol(in) + H(+)(in). In terms of biological role, h(+)-myo-inositol cotransporter. Can also transport related stereoisomers. In Homo sapiens (Human), this protein is Proton myo-inositol cotransporter.